Reading from the N-terminus, the 333-residue chain is Leucine carboxyl methyltransferase 1 (333 aa).

S-adenosyl-L-methionine contacts are provided by residues lysine 42, arginine 82, glycine 107, aspartate 131, 181–182 (DL), and glutamate 208.

It belongs to the methyltransferase superfamily. LCMT family.

It carries out the reaction [phosphatase 2A protein]-C-terminal L-leucine + S-adenosyl-L-methionine = [phosphatase 2A protein]-C-terminal L-leucine methyl ester + S-adenosyl-L-homocysteine. In terms of biological role, methylates the carboxyl group of the C-terminal leucine residue of protein phosphatase 2A catalytic subunits to form alpha-leucine ester residues. This Caenorhabditis elegans protein is Leucine carboxyl methyltransferase 1.